The chain runs to 173 residues: Photosystem I assembly protein Ycf3 (173 aa).

TPR repeat units lie at residues A35–P68, S72–M105, and G120–N153.

It belongs to the Ycf3 family.

The protein resides in the cellular thylakoid membrane. In terms of biological role, essential for the assembly of the photosystem I (PSI) complex. May act as a chaperone-like factor to guide the assembly of the PSI subunits. The polypeptide is Photosystem I assembly protein Ycf3 (Synechococcus elongatus (strain ATCC 33912 / PCC 7942 / FACHB-805) (Anacystis nidulans R2)).